The following is a 234-amino-acid chain: uncharacterized protein (234 aa).

The disordered stretch occupies residues D199–I234.

This is an uncharacterized protein from Buchnera aphidicola subsp. Schizaphis graminum (strain Sg).